A 204-amino-acid polypeptide reads, in one-letter code: Serotonin N-acetyltransferase (204 aa).

Thr28 is modified (phosphothreonine; by PKA). The 162-residue stretch at 32-193 (SEFRCLTPED…SFTELHCSLQ (162 aa)) folds into the N-acetyltransferase domain. Leu121 serves as a coordination point for substrate. Acetyl-CoA-binding positions include 121 to 123 (LAV) and 129 to 134 (QQGRGP). Residue Met156 participates in substrate binding. 165-167 (YER) contacts acetyl-CoA. Ser202 is modified (phosphoserine).

Belongs to the acetyltransferase family. AANAT subfamily. In terms of assembly, monomer. Interacts with several 14-3-3 proteins, including YWHAB, YWHAE, YWHAG and YWHAZ, preferentially when phosphorylated at Thr-28. Phosphorylation on Ser-202 also allows binding to YWHAZ, but with lower affinity. The interaction with YWHAZ considerably increases affinity for arylalkylamines and acetyl-CoA and protects the enzyme from dephosphorylation and proteasomal degradation. It may also prevent thiol-dependent inactivation. Post-translationally, cAMP-dependent phosphorylation regulates AANAT activity by promoting interaction with 14-3-3 proteins. Phosphorylation levels exhibit night/day variations, with an increase during nighttime. In terms of tissue distribution, highly expressed in pineal gland and in the photoreceptor outer segments in the retina. Expressed at about 100-fold lower levels in the pituitary gland and testis. Not detected in other tissues.

It is found in the cytoplasm. The catalysed reaction is a 2-arylethylamine + acetyl-CoA = an N-acetyl-2-arylethylamine + CoA + H(+). Its pathway is aromatic compound metabolism; melatonin biosynthesis; melatonin from serotonin: step 1/2. Controls the night/day rhythm of melatonin production in the pineal gland. Catalyzes the N-acetylation of serotonin into N-acetylserotonin, the penultimate step in the synthesis of melatonin. The protein is Serotonin N-acetyltransferase (AANAT) of Macaca mulatta (Rhesus macaque).